Reading from the N-terminus, the 941-residue chain is Cell wall protein IFF3 (941 aa).

The first 20 residues, 1 to 20 (MQLFQNILVSIALLTQVVFA), serve as a signal peptide directing secretion. Asn36, Asn367, Asn686, Asn732, Asn790, Asn818, Asn825, Asn884, and Asn917 each carry an N-linked (GlcNAc...) asparagine glycan. Asn917 carries the GPI-anchor amidated asparagine lipid modification. Positions 918 to 941 (GSNKESIENIKYLTLVVFGLMMFM) are cleaved as a propeptide — removed in mature form.

Belongs to the HYR1/IFF family. In terms of processing, the GPI-anchor is attached to the protein in the endoplasmic reticulum and serves to target the protein to the cell surface. There, the glucosamine-inositol phospholipid moiety is cleaved off and the GPI-modified mannoprotein is covalently attached via its lipidless GPI glycan remnant to the 1,6-beta-glucan of the outer cell wall layer.

The protein localises to the secreted. It localises to the cell wall. It is found in the membrane. Functionally, GPI-anchored cell wall protein involved in cell wall organization, hyphal growth, as well as in host-fungal interaction and virulence. This chain is Cell wall protein IFF3 (IFF3), found in Candida albicans (strain SC5314 / ATCC MYA-2876) (Yeast).